A 341-amino-acid polypeptide reads, in one-letter code: tRNA uridine(34) hydroxylase (341 aa).

The region spanning 139–233 (SDPEVVLVDT…YLEEVPSTET (95 aa)) is the Rhodanese domain. Residue cysteine 193 is the Cysteine persulfide intermediate of the active site. Basic and acidic residues-rich tracts occupy residues 306–316 (SLAEERGESHI) and 324–341 (IEERRQEKNDKKAKQANK). The tract at residues 306–341 (SLAEERGESHIGGDIQNIIEERRQEKNDKKAKQANK) is disordered.

This sequence belongs to the TrhO family.

The enzyme catalyses uridine(34) in tRNA + AH2 + O2 = 5-hydroxyuridine(34) in tRNA + A + H2O. Its function is as follows. Catalyzes oxygen-dependent 5-hydroxyuridine (ho5U) modification at position 34 in tRNAs. This chain is tRNA uridine(34) hydroxylase, found in Colwellia psychrerythraea (strain 34H / ATCC BAA-681) (Vibrio psychroerythus).